The sequence spans 88 residues: Small ribosomal subunit protein bS20 (88 aa).

The protein belongs to the bacterial ribosomal protein bS20 family.

In terms of biological role, binds directly to 16S ribosomal RNA. The sequence is that of Small ribosomal subunit protein bS20 from Clostridium botulinum (strain ATCC 19397 / Type A).